The sequence spans 326 residues: ATP synthase subunit gamma, mitochondrial (326 aa).

The transit peptide at 1 to 45 (MAMAALRREGRRLAAAPFTSPTPLNALRSSLVSPSEEIGLSGVRS) directs the protein to the mitochondrion.

This sequence belongs to the ATPase gamma chain family. F-type ATPases have 2 components, CF(1) - the catalytic core - and CF(0) - the membrane proton channel. CF(1) has five subunits: alpha(3), beta(3), gamma(1), delta(1), epsilon(1). CF(0) has three main subunits: a, b and c.

It localises to the mitochondrion. The protein resides in the mitochondrion inner membrane. In terms of biological role, mitochondrial membrane ATP synthase (F(1)F(0) ATP synthase or Complex V) produces ATP from ADP in the presence of a proton gradient across the membrane which is generated by electron transport complexes of the respiratory chain. F-type ATPases consist of two structural domains, F(1) - containing the extramembraneous catalytic core, and F(0) - containing the membrane proton channel, linked together by a central stalk and a peripheral stalk. During catalysis, ATP synthesis in the catalytic domain of F(1) is coupled via a rotary mechanism of the central stalk subunits to proton translocation. Part of the complex F(1) domain and the central stalk which is part of the complex rotary element. The gamma subunit protrudes into the catalytic domain formed of alpha(3)beta(3). Rotation of the central stalk against the surrounding alpha(3)beta(3) subunits leads to hydrolysis of ATP in three separate catalytic sites on the beta subunits. This chain is ATP synthase subunit gamma, mitochondrial (ATPC), found in Ipomoea batatas (Sweet potato).